Here is a 4042-residue protein sequence, read N- to C-terminus: Polyketide synthase-nonribosomal peptide synthetase ffsA (4042 aa).

The 437-residue stretch at 17–453 (REPIAIVGSA…GANAHAILEA (437 aa)) folds into the Ketosynthase family 3 (KS3) domain. Active-site for beta-ketoacyl synthase activity residues include Cys190, His330, and His373. Residues 561–878 (VFTGQGAQWK…TGLLSRGRPD (318 aa)) are malonyl-CoA:ACP transacylase (MAT) domain. Residues 950 to 1083 (HEILGTKCPD…GKLKVTLGEP (134 aa)) are N-terminal hotdog fold. The interval 950–1249 (HEILGTKCPD…LQTKPLANAT (300 aa)) is dehydratase (DH) domain. Residues 950-1251 (HEILGTKCPD…TKPLANATAA (302 aa)) form the PKS/mFAS DH domain. His982 functions as the Proton acceptor; for dehydratase activity in the catalytic mechanism. The C-terminal hotdog fold stretch occupies residues 1098–1251 (MIDVDSERFY…TKPLANATAA (154 aa)). Catalysis depends on Asp1158, which acts as the Proton donor; for dehydratase activity. The interval 1390 to 1613 (DNLLNDFYVH…VDDHVNFLRD (224 aa)) is methyltransferase (MT) domain. The ketoreductase (KR)domain stretch occupies residues 2116 to 2289 (TYWLVGLSGG…AGSAINIGTI (174 aa)). Residues 2399-2476 (EAREIIEESL…EMVAAAQEKL (78 aa)) enclose the Carrier 1 domain. O-(pantetheine 4'-phosphoryl)serine is present on Ser2436. The tract at residues 2515 to 2601 (EKAEYADFDD…FDSDSDNASI (87 aa)) is disordered. Residues 2520–2532 (ADFDDENEEEGIP) are compositionally biased toward acidic residues. The condensation stretch occupies residues 2629 to 3061 (RTLPMSFGQT…ISRPSLYDPQ (433 aa)). The tract at residues 3089–3486 (EIVKAHGSKV…EDGHLVLEGR (398 aa)) is adenylation. The region spanning 3607-3684 (RDSTEKLKDI…AMARMVDPTA (78 aa)) is the Carrier 2 domain. Residue Ser3644 is modified to O-(pantetheine 4'-phosphoryl)serine. The reductase-like domain stretch occupies residues 3750–3971 (ITGATGFLGK…DFVDVEKVAT (222 aa)).

The protein in the C-terminal section; belongs to the NRP synthetase family.

It functions in the pathway mycotoxin biosynthesis. Functionally, hybrid PKS-NRPS synthetase; part of the gene cluster that mediates the biosynthesis of the cytotoxic leucine-containing cytochalasans, including aspochalasin C, aspochalasin E, TMC-169, flavichalasine F, aspergillin PZ, aspochalasin M and flavichalasine G. The first step in the pathway is catalyzed by the hybrid PKS-NRPS ffsA that utilizes 8 units of malonyl-CoA to iteratively assemble the octaketide chain before addition of L-leucine by the C-terminal NRPS modules. Because ffsA lacks a designated enoylreductase (ER) domain, the required activity is provided the enoyl reductase fssC. The methyltransferase (MT) domain of ffsA catalyzes the alpha-methylation at C10 and C14 using S-adenosyl-L-methionine as the methyl-donating cosubstrate. Reduction by the hydrolyase ffsE, followed by dehydration and intra-molecular Diels-Alder cyclization by the Diels-Alderase ffsF then yield the required isoindolone-fused macrocycle. A number of oxidative steps catalyzed by the tailoring cytochrome P450 monooxygenase ffsD, the FAD-linked oxidoreductase ffsJ and the short-chain dehydrogenase/reductase ffsI, are further required to afford the final products. This is Polyketide synthase-nonribosomal peptide synthetase ffsA from Aspergillus flavipes.